The primary structure comprises 375 residues: MQCALFDAGRCRSCQWIEQPVSQQLSAKMTDLQQLLAAHPVAEWCAPVSGPEQGFRNKAKMVVSGSVEKPLLGMLHRDGTPEDLTDCPLYPASFEPVFAALKPFIARAGLTPYNVERKRGELKYLLLTESQLDGGMMLRFILRSEAKLEQLRAALPWLQQQLPQLKVITANIQPVHMAIMEGEREVFFTDQQALAERFNDVPLWIRPHSFFQTNPTVASQLYATARDWVRALNIHHMWDLFCGVGGFGLHCATPQMTLTGIEISPEAIACAKQSAAQLGLTDLHFQALDSAEFATGQGRVPELVLVNPPRRGIGKTLCDYLSQMAPDFIIYSSCNAQTMAKDFGHLPGYRVERVQLFDMFPHTAHYEVLTLLVKS.

Cys-3, Cys-11, Cys-14, and Cys-87 together coordinate [4Fe-4S] cluster. Gln-212, Phe-241, Glu-262, and Asn-307 together coordinate S-adenosyl-L-methionine. The active-site Nucleophile is the Cys-334.

Belongs to the class I-like SAM-binding methyltransferase superfamily. RNA M5U methyltransferase family. RlmC subfamily.

The catalysed reaction is uridine(747) in 23S rRNA + S-adenosyl-L-methionine = 5-methyluridine(747) in 23S rRNA + S-adenosyl-L-homocysteine + H(+). Its function is as follows. Catalyzes the formation of 5-methyl-uridine at position 747 (m5U747) in 23S rRNA. The sequence is that of 23S rRNA (uracil(747)-C(5))-methyltransferase RlmC from Enterobacter sp. (strain 638).